A 306-amino-acid polypeptide reads, in one-letter code: tRNA dimethylallyltransferase (306 aa).

12 to 19 (GPTASGKT) lines the ATP pocket. 14 to 19 (TASGKT) provides a ligand contact to substrate. Interaction with substrate tRNA stretches follow at residues 37–40 (DSAL), 161–165 (QRLSR), and 242–247 (RCVGYR).

This sequence belongs to the IPP transferase family. Monomer. Mg(2+) serves as cofactor.

It catalyses the reaction adenosine(37) in tRNA + dimethylallyl diphosphate = N(6)-dimethylallyladenosine(37) in tRNA + diphosphate. Its function is as follows. Catalyzes the transfer of a dimethylallyl group onto the adenine at position 37 in tRNAs that read codons beginning with uridine, leading to the formation of N6-(dimethylallyl)adenosine (i(6)A). This is tRNA dimethylallyltransferase from Shewanella amazonensis (strain ATCC BAA-1098 / SB2B).